A 307-amino-acid chain; its full sequence is Serine/threonine-protein phosphatase PP2A-5 catalytic subunit (307 aa).

Mn(2+) contacts are provided by Asp-55, His-57, Asp-83, and Asn-115. His-116 functions as the Proton donor in the catalytic mechanism. 2 residues coordinate Mn(2+): His-165 and His-239. The residue at position 307 (Leu-307) is a Leucine methyl ester.

It belongs to the PPP phosphatase family. PP-2A subfamily. As to quaternary structure, PP2A consists of a common heterodimeric core enzyme, composed of a 36 kDa catalytic subunit (subunit C) and a 65 kDa constant regulatory subunit (subunit A), that associates with a variety of regulatory subunits such as subunits B (the R2/B/PR55/B55, R3/B''/PR72/PR130/PR59 and R5/B'/B56 families). Also interacts with CHIP and TAF12B. Interacts with B'THETA. Interacts with CLC-A, CLC-B, CLC-C and CLC-G. Requires Mn(2+) as cofactor. Post-translationally, reversibly methyl esterified on Leu-307 by leucine carboxyl methyltransferase 1 (LCMT1) and pectin methylesterase 1 (PME1). Carboxyl methylation influences the affinity of the catalytic subunit for the different regulatory subunits, thereby modulating the PP2A holoenzyme's substrate specificity, enzyme activity and cellular localization. Phosphorylation of either threonine (by autophosphorylation-activated protein kinase) or tyrosine results in inactivation of the phosphatase. Auto-dephosphorylation has been suggested as a mechanism for reactivation. In terms of processing, ubiquitinated. CHIP-mediated ubiquitination enhances phosphatase activity after an abiotic stress such as low temperature or darkness.

It localises to the cytoplasm. Its subcellular location is the cytosol. The protein resides in the peroxisome. It catalyses the reaction O-phospho-L-seryl-[protein] + H2O = L-seryl-[protein] + phosphate. The catalysed reaction is O-phospho-L-threonyl-[protein] + H2O = L-threonyl-[protein] + phosphate. In terms of biological role, associates with the serine/threonine-protein phosphatase PP2A regulatory subunits A and B' to positively regulates beta-oxidation of fatty acids and protoauxins in peroxisomes by dephosphorylating peroxisomal beta-oxidation-related proteins. Involved in the positive regulation of salt stress responses. May function by increasing chloride channel activities on vacuolar membranes. This chain is Serine/threonine-protein phosphatase PP2A-5 catalytic subunit, found in Arabidopsis thaliana (Mouse-ear cress).